The primary structure comprises 1222 residues: ATP-dependent helicase/nuclease subunit A (1222 aa).

In terms of domain architecture, UvrD-like helicase ATP-binding spans 39 to 495; it reads QKRTAQQIEA…ILLKENFRSQ (457 aa). 60 to 67 contributes to the ATP binding site; sequence ASAGSGKT. Residues 524–810 form the UvrD-like helicase C-terminal domain; sequence QLIAGSHAQT…NLMTIHKSKG (287 aa).

This sequence belongs to the helicase family. AddA subfamily. As to quaternary structure, heterodimer of AddA and AddB/RexB. Mg(2+) is required as a cofactor.

It carries out the reaction Couples ATP hydrolysis with the unwinding of duplex DNA by translocating in the 3'-5' direction.. The enzyme catalyses ATP + H2O = ADP + phosphate + H(+). Its function is as follows. The heterodimer acts as both an ATP-dependent DNA helicase and an ATP-dependent, dual-direction single-stranded exonuclease. Recognizes the chi site generating a DNA molecule suitable for the initiation of homologous recombination. The AddA nuclease domain is required for chi fragment generation; this subunit has the helicase and 3' -&gt; 5' nuclease activities. The protein is ATP-dependent helicase/nuclease subunit A of Streptococcus pyogenes serotype M2 (strain MGAS10270).